Reading from the N-terminus, the 333-residue chain is UDP-3-O-acylglucosamine N-acyltransferase 2 (333 aa).

Histidine 243 (proton acceptor) is an active-site residue.

It belongs to the transferase hexapeptide repeat family. LpxD subfamily. Homotrimer.

It carries out the reaction a UDP-3-O-[(3R)-3-hydroxyacyl]-alpha-D-glucosamine + a (3R)-hydroxyacyl-[ACP] = a UDP-2-N,3-O-bis[(3R)-3-hydroxyacyl]-alpha-D-glucosamine + holo-[ACP] + H(+). It participates in bacterial outer membrane biogenesis; LPS lipid A biosynthesis. Functionally, catalyzes the N-acylation of UDP-3-O-acylglucosamine using 3-hydroxyacyl-ACP as the acyl donor. Is involved in the biosynthesis of lipid A, a phosphorylated glycolipid that anchors the lipopolysaccharide to the outer membrane of the cell. The chain is UDP-3-O-acylglucosamine N-acyltransferase 2 from Koribacter versatilis (strain Ellin345).